A 234-amino-acid chain; its full sequence is Ribosome maturation protein SDO1 homolog (234 aa).

It belongs to the SDO1/SBDS family.

In Archaeoglobus fulgidus (strain ATCC 49558 / DSM 4304 / JCM 9628 / NBRC 100126 / VC-16), this protein is Ribosome maturation protein SDO1 homolog.